Here is a 245-residue protein sequence, read N- to C-terminus: Acetylglutamate kinase (245 aa).

Residues 41–42 (GG), R63, and N156 each bind substrate.

Belongs to the acetylglutamate kinase family. ArgB subfamily.

The protein resides in the cytoplasm. The enzyme catalyses N-acetyl-L-glutamate + ATP = N-acetyl-L-glutamyl 5-phosphate + ADP. Its pathway is amino-acid biosynthesis; L-arginine biosynthesis; N(2)-acetyl-L-ornithine from L-glutamate: step 2/4. In terms of biological role, catalyzes the ATP-dependent phosphorylation of N-acetyl-L-glutamate. The protein is Acetylglutamate kinase of Staphylococcus epidermidis (strain ATCC 35984 / DSM 28319 / BCRC 17069 / CCUG 31568 / BM 3577 / RP62A).